The following is a 457-amino-acid chain: tRNA-2-methylthio-N(6)-dimethylallyladenosine synthase (457 aa).

One can recognise an MTTase N-terminal domain in the interval 3 to 120 (KKVYVKTFGC…LPQMIDARRE (118 aa)). Positions 12, 49, 83, 157, 161, and 164 each coordinate [4Fe-4S] cluster. The Radical SAM core domain maps to 143 to 377 (RVEGPSAFVS…QATIEENVAR (235 aa)). Residues 380 to 447 (QSMLGKVERI…PHSLRGELVL (68 aa)) form the TRAM domain.

It belongs to the methylthiotransferase family. MiaB subfamily. In terms of assembly, monomer. Requires [4Fe-4S] cluster as cofactor.

It localises to the cytoplasm. The enzyme catalyses N(6)-dimethylallyladenosine(37) in tRNA + (sulfur carrier)-SH + AH2 + 2 S-adenosyl-L-methionine = 2-methylsulfanyl-N(6)-dimethylallyladenosine(37) in tRNA + (sulfur carrier)-H + 5'-deoxyadenosine + L-methionine + A + S-adenosyl-L-homocysteine + 2 H(+). Catalyzes the methylthiolation of N6-(dimethylallyl)adenosine (i(6)A), leading to the formation of 2-methylthio-N6-(dimethylallyl)adenosine (ms(2)i(6)A) at position 37 in tRNAs that read codons beginning with uridine. This is tRNA-2-methylthio-N(6)-dimethylallyladenosine synthase from Burkholderia mallei (strain NCTC 10247).